The following is a 306-amino-acid chain: ORF-B protein (306 aa).

A run of 3 helical transmembrane segments spans residues 92 to 112, 120 to 140, and 161 to 181; these read MIQWDYVFYLLPRVWIMFPFI, LTHLLTLTTSVLSATSLVFGW, and VIEWLAQFSFLFTHVTLIVVS.

As to quaternary structure, interacts with host RACK1.

The protein resides in the host cytoplasm. The protein localises to the host cell membrane. This is ORF-B protein from Sander vitreus (Walleye).